A 413-amino-acid polypeptide reads, in one-letter code: Cell division protein FtsA (413 aa).

This sequence belongs to the FtsA/MreB family. In terms of assembly, self-interacts. Interacts with FtsZ.

It is found in the cell inner membrane. Functionally, cell division protein that is involved in the assembly of the Z ring. May serve as a membrane anchor for the Z ring. This chain is Cell division protein FtsA, found in Borreliella burgdorferi (strain ATCC 35210 / DSM 4680 / CIP 102532 / B31) (Borrelia burgdorferi).